Here is a 721-residue protein sequence, read N- to C-terminus: Catalase-peroxidase (721 aa).

Residues 95 to 223 constitute a cross-link (tryptophyl-tyrosyl-methioninium (Trp-Tyr) (with M-249)); that stretch reads WHSAGSYRLF…LGAVHMGLIY (129 aa). The active-site Proton acceptor is H96. Residues 223–249 constitute a cross-link (tryptophyl-tyrosyl-methioninium (Tyr-Met) (with W-95)); it reads YVNPQGRDGKPDPLKSAHDVRVTFKRM. H264 contacts heme b.

The protein belongs to the peroxidase family. Peroxidase/catalase subfamily. As to quaternary structure, homodimer or homotetramer. Heme b is required as a cofactor. Formation of the three residue Trp-Tyr-Met cross-link is important for the catalase, but not the peroxidase activity of the enzyme.

The catalysed reaction is H2O2 + AH2 = A + 2 H2O. It catalyses the reaction 2 H2O2 = O2 + 2 H2O. Functionally, bifunctional enzyme with both catalase and broad-spectrum peroxidase activity. The polypeptide is Catalase-peroxidase (Parvibaculum lavamentivorans (strain DS-1 / DSM 13023 / NCIMB 13966)).